The chain runs to 126 residues: Aspartate 1-decarboxylase (126 aa).

Ser-25 serves as the catalytic Schiff-base intermediate with substrate; via pyruvic acid. Residue Ser-25 is modified to Pyruvic acid (Ser). Thr-57 contributes to the substrate binding site. The active-site Proton donor is the Tyr-58. Gly-73 to Ala-75 contributes to the substrate binding site.

The protein belongs to the PanD family. As to quaternary structure, heterooctamer of four alpha and four beta subunits. It depends on pyruvate as a cofactor. Post-translationally, is synthesized initially as an inactive proenzyme, which is activated by self-cleavage at a specific serine bond to produce a beta-subunit with a hydroxyl group at its C-terminus and an alpha-subunit with a pyruvoyl group at its N-terminus.

The protein localises to the cytoplasm. The enzyme catalyses L-aspartate + H(+) = beta-alanine + CO2. It functions in the pathway cofactor biosynthesis; (R)-pantothenate biosynthesis; beta-alanine from L-aspartate: step 1/1. In terms of biological role, catalyzes the pyruvoyl-dependent decarboxylation of aspartate to produce beta-alanine. The polypeptide is Aspartate 1-decarboxylase (Tolumonas auensis (strain DSM 9187 / NBRC 110442 / TA 4)).